The sequence spans 469 residues: Ubiquitin carboxyl-terminal hydrolase MINDY-1 (469 aa).

The disordered stretch occupies residues 1-85 (MEYHQPEDPA…APPGPTLGTL (85 aa)). The span at 23–53 (ENHEVLAGPDEHPQDTDARDADGEAREREPA) shows a compositional bias: basic and acidic residues. Low complexity predominate over residues 66–76 (LESPLPEASSA). Phosphoserine is present on serine 103. Cysteine 137 functions as the Nucleophile in the catalytic mechanism. Histidine 319 acts as the Proton acceptor in catalysis. A ubiquitin-binding domain (UBD) region spans residues 388-426 (QVDQDYLIALSLQQQQPRGPLGLTDLELAQQLQQEEYQQ). Position 441 is a phosphoserine (serine 441). Residues 441–469 (SLQGRGATSGRPAGERRQRPKHESDCILL) form a disordered region. Residues 453–469 (AGERRQRPKHESDCILL) show a composition bias toward basic and acidic residues.

Belongs to the MINDY deubiquitinase family. FAM63 subfamily.

The catalysed reaction is Thiol-dependent hydrolysis of ester, thioester, amide, peptide and isopeptide bonds formed by the C-terminal Gly of ubiquitin (a 76-residue protein attached to proteins as an intracellular targeting signal).. Hydrolase that can specifically remove 'Lys-48'-linked conjugated ubiquitin from proteins. Has exodeubiquitinase activity and has a preference for long polyubiquitin chains. May play a regulatory role at the level of protein turnover. The sequence is that of Ubiquitin carboxyl-terminal hydrolase MINDY-1 from Homo sapiens (Human).